Here is a 182-residue protein sequence, read N- to C-terminus: uncharacterized protein (182 aa).

The interval 151–172 (RGPGKPFADEKPCPRERPPADQ) is disordered. Residues 157 to 169 (FADEKPCPRERPP) show a composition bias toward basic and acidic residues.

This is an uncharacterized protein from Mycobacterium tuberculosis (strain CDC 1551 / Oshkosh).